The following is a 499-amino-acid chain: Putative ribose/galactose/methyl galactoside import ATP-binding protein 3 (499 aa).

ABC transporter domains follow at residues 8 to 243 and 253 to 497; these read LRMR…VGRE and SKIG…TGEE. 40 to 47 lines the ATP pocket; the sequence is GENGAGKS.

It belongs to the ABC transporter superfamily. Carbohydrate importer 2 (CUT2) (TC 3.A.1.2) family.

The protein resides in the cell inner membrane. It catalyses the reaction D-ribose(out) + ATP + H2O = D-ribose(in) + ADP + phosphate + H(+). The enzyme catalyses D-galactose(out) + ATP + H2O = D-galactose(in) + ADP + phosphate + H(+). Functionally, part of an ABC transporter complex involved in carbohydrate import. Could be involved in ribose, galactose and/or methyl galactoside import. Responsible for energy coupling to the transport system. The sequence is that of Putative ribose/galactose/methyl galactoside import ATP-binding protein 3 from Agrobacterium fabrum (strain C58 / ATCC 33970) (Agrobacterium tumefaciens (strain C58)).